Here is an 876-residue protein sequence, read N- to C-terminus: E3 ubiquitin-protein ligase TRIM71 (876 aa).

The RING-type zinc-finger motif lies at 12–90 (CPLCKEMCGS…ALKLRCPICD (79 aa)). Residues 26–40 (SSNSSTSSSSSQTSG) are compositionally biased toward low complexity. 2 disordered regions span residues 26-46 (SSNS…GGGG) and 128-192 (KNGR…AALL). A compositionally biased stretch (gly residues) spans 137–148 (PAAGSGAGGGGA). Low complexity predominate over residues 160-182 (RAAAAASSPAAGSAAPSASSSSS). Residues 200–247 (QGEPRCSSCDEGNAASSRCLDCQEHLCDNCVRAHQRVRLTKDHFIERF) form a B box-type 1; atypical zinc finger. Residues C205, C208, C229, H233, C286, H289, C309, and H314 each contribute to the Zn(2+) site. The B box-type 2 zinc-finger motif lies at 281–322 (ERASYCQHHDDEVLHFYCDTCSVPICRECTMGRHVGHSFIYL). Coiled coils occupy residues 344–373 (RQAI…SEVK) and 399–434 (QVKA…EEGR). One copy of the Filamin repeat lies at 487–588 (SSGAFAPLTK…IENSPFKVVV (102 aa)). NHL repeat units follow at residues 601 to 644 (GLSF…FKPC), 648 to 691 (HHKF…FTFE), 695 to 738 (ILKF…FGPD), 742 to 785 (LNKY…IHAD), 789 to 832 (ARFL…FESN), and 836 to 876 (LCKF…ILVF).

Belongs to the TRIM/RBCC family.

The protein localises to the cytoplasm. The protein resides in the P-body. It carries out the reaction S-ubiquitinyl-[E2 ubiquitin-conjugating enzyme]-L-cysteine + [acceptor protein]-L-lysine = [E2 ubiquitin-conjugating enzyme]-L-cysteine + N(6)-ubiquitinyl-[acceptor protein]-L-lysine.. It participates in protein modification; protein ubiquitination. E3 ubiquitin-protein ligase that cooperates with the microRNAs (miRNAs) machinery and promotes embryonic stem cells proliferation and maintenance. Binds to miRNAs and participates in post-transcriptional repression of transcripts. Required to maintain proliferation and prevent premature differentiation of neural progenitor cells during early neural development. The chain is E3 ubiquitin-protein ligase TRIM71 (TRIM71) from Gallus gallus (Chicken).